Consider the following 349-residue polypeptide: Macrophage-capping protein (349 aa).

Met-1 is subject to N-acetylmethionine. Gelsolin-like repeat units lie at residues 28 to 107 (KLKP…DLFM), 147 to 222 (KNIR…AEMI), and 264 to 342 (LTKV…PIFK). Residues 138–147 (RKLYQVKGKK) carry the Nuclear localization signal motif. Residue Ser-338 is modified to Phosphoserine.

It belongs to the villin/gelsolin family. As to quaternary structure, interacts with NUP62. Interacts with NUTF2 and RAN; involved in CAPG nuclear import. Phosphorylated.

The protein resides in the nucleus. The protein localises to the cytoplasm. It localises to the melanosome. It is found in the cell projection. Its subcellular location is the lamellipodium. The protein resides in the ruffle. Calcium-sensitive protein which reversibly blocks the barbed ends of actin filaments but does not sever preformed actin filaments. May play an important role in macrophage function. May play a role in regulating cytoplasmic and/or nuclear structures through potential interactions with actin. May bind DNA. Uncapping occurs either when Ca(2+) falls or when the concentration of polyphosphoinositide rises, both at low and high Ca(2+). This is Macrophage-capping protein (Capg) from Rattus norvegicus (Rat).